The chain runs to 154 residues: Large ribosomal subunit protein uL13 (154 aa).

Positions 132-154 are disordered; that stretch reads PHEAQQPETLDVGAMNRKNKRAA.

This sequence belongs to the universal ribosomal protein uL13 family. In terms of assembly, part of the 50S ribosomal subunit.

This protein is one of the early assembly proteins of the 50S ribosomal subunit, although it is not seen to bind rRNA by itself. It is important during the early stages of 50S assembly. The chain is Large ribosomal subunit protein uL13 from Rhodopseudomonas palustris (strain HaA2).